The chain runs to 320 residues: MTTEQTISANVQFFTISDDEAGQRLDNFLLAKLKGVPKSLIYRIVRKGEVRVNKGRVKPDYKLQHNDIVRIPLVRVTPKNEAPISTKLNKVAELEQHILYEDDVMLVLNKPSGIGVHGGSGLSFGVIEALRALRPQARFLELVHRIDRDTSGILLVAKKRSALRALHEQLREKVVQKDYLALVRGQWQAHINVIKAPLLKNELQSGERIVKVSEQGKPSETRFSIEERYPNATLIKASPITGRTHQIRVHTQYAGHPIACDDRYGDQAFDAKLKQAGLNRLFLHAHSIRFEHPKTAEQMFITAPLDHHLKTILAKLRAEK.

Residues 23 to 95 (QRLDNFLLAK…TKLNKVAELE (73 aa)) form the S4 RNA-binding domain. The active site involves Asp-147.

The protein belongs to the pseudouridine synthase RluA family.

It catalyses the reaction uridine(955/2504/2580) in 23S rRNA = pseudouridine(955/2504/2580) in 23S rRNA. Functionally, responsible for synthesis of pseudouridine from uracil at positions 955, 2504 and 2580 in 23S ribosomal RNA. The protein is Ribosomal large subunit pseudouridine synthase C (rluC) of Haemophilus ducreyi (strain 35000HP / ATCC 700724).